The following is a 111-amino-acid chain: Dynein light chain Tctex-type (111 aa).

The protein belongs to the dynein light chain Tctex-type family.

The protein resides in the cytoplasm. Its subcellular location is the cytoskeleton. Functionally, acts as a non-catalytic accessory component of a dynein complex. The polypeptide is Dynein light chain Tctex-type (dlcA) (Dictyostelium discoideum (Social amoeba)).